Consider the following 368-residue polypeptide: DNA replication and repair protein RecF (368 aa).

30–37 contributes to the ATP binding site; that stretch reads GRNGSGKT.

It belongs to the RecF family.

It localises to the cytoplasm. The RecF protein is involved in DNA metabolism; it is required for DNA replication and normal SOS inducibility. RecF binds preferentially to single-stranded, linear DNA. It also seems to bind ATP. This Chlorobaculum parvum (strain DSM 263 / NCIMB 8327) (Chlorobium vibrioforme subsp. thiosulfatophilum) protein is DNA replication and repair protein RecF.